The primary structure comprises 159 residues: IQ domain-containing protein J (159 aa).

The IQ domain maps to 47–67; sequence ESKVKIIQRAWREYLQRQEPL. Residues 63 to 88 form a disordered region; it reads RQEPLGKRSPSPPSVSSEKLSSSVSM. Residues 76–87 show a composition bias toward low complexity; the sequence is SVSSEKLSSSVS.

The sequence is that of IQ domain-containing protein J from Homo sapiens (Human).